Here is a 356-residue protein sequence, read N- to C-terminus: DNA polymerase IV (356 aa).

In terms of domain architecture, UmuC spans 7 to 188; that stretch reads IIHIDMDCFY…LPLKKIPRVG (182 aa). Residues Asp-11 and Asp-106 each contribute to the Mg(2+) site. Glu-107 is a catalytic residue.

The protein belongs to the DNA polymerase type-Y family. As to quaternary structure, monomer. Requires Mg(2+) as cofactor.

The protein localises to the cytoplasm. It catalyses the reaction DNA(n) + a 2'-deoxyribonucleoside 5'-triphosphate = DNA(n+1) + diphosphate. Its function is as follows. Poorly processive, error-prone DNA polymerase involved in untargeted mutagenesis. Copies undamaged DNA at stalled replication forks, which arise in vivo from mismatched or misaligned primer ends. These misaligned primers can be extended by PolIV. Exhibits no 3'-5' exonuclease (proofreading) activity. May be involved in translesional synthesis, in conjunction with the beta clamp from PolIII. In Actinobacillus pleuropneumoniae serotype 5b (strain L20), this protein is DNA polymerase IV.